The chain runs to 557 residues: Inositol-3-phosphate synthase 1 (557 aa).

NAD(+) contacts are provided by glycine 67, glycine 68, asparagine 69, asparagine 70, aspartate 141, serine 177, valine 178, glutamine 188, arginine 191, threonine 228, alanine 229, asparagine 230, threonine 231, glycine 278, serine 279, aspartate 303, serine 306, asparagine 337, asparagine 338, aspartate 339, and lysine 352. The residue at position 279 (serine 279) is a Phosphoserine. Serine 357 is modified (phosphoserine). The NAD(+) site is built by glycine 390, aspartate 391, aspartate 419, and serine 420. The segment at glycine 512–alanine 557 is disordered. The residue at position 524 (serine 524) is a Phosphoserine.

The protein belongs to the myo-inositol 1-phosphate synthase family. The cofactor is NAD(+). In testis, it is expressed in Sertoli cells. Highly expressed in 2 types of germ cells, pachytene spermatocytes and round spermatids.

The protein localises to the cytoplasm. It carries out the reaction D-glucose 6-phosphate = 1D-myo-inositol 3-phosphate. Its pathway is polyol metabolism; myo-inositol biosynthesis; myo-inositol from D-glucose 6-phosphate: step 1/2. Key enzyme in myo-inositol biosynthesis pathway that catalyzes the conversion of glucose 6-phosphate to 1-myo-inositol 1-phosphate in a NAD-dependent manner. Rate-limiting enzyme in the synthesis of all inositol-containing compounds. The chain is Inositol-3-phosphate synthase 1 (Isyna1) from Mus musculus (Mouse).